We begin with the raw amino-acid sequence, 383 residues long: Lipid-A-disaccharide synthase (383 aa).

Belongs to the LpxB family.

The enzyme catalyses a lipid X + a UDP-2-N,3-O-bis[(3R)-3-hydroxyacyl]-alpha-D-glucosamine = a lipid A disaccharide + UDP + H(+). It participates in bacterial outer membrane biogenesis; LPS lipid A biosynthesis. Its function is as follows. Condensation of UDP-2,3-diacylglucosamine and 2,3-diacylglucosamine-1-phosphate to form lipid A disaccharide, a precursor of lipid A, a phosphorylated glycolipid that anchors the lipopolysaccharide to the outer membrane of the cell. In Alcanivorax borkumensis (strain ATCC 700651 / DSM 11573 / NCIMB 13689 / SK2), this protein is Lipid-A-disaccharide synthase.